The sequence spans 155 residues: Ribosome maturation factor RimP (155 aa).

It belongs to the RimP family.

It is found in the cytoplasm. Its function is as follows. Required for maturation of 30S ribosomal subunits. This Salinibacter ruber (strain DSM 13855 / M31) protein is Ribosome maturation factor RimP.